Reading from the N-terminus, the 472-residue chain is Ribulose bisphosphate carboxylase large chain 1 (472 aa).

Substrate contacts are provided by N115 and T165. Catalysis depends on K167, which acts as the Proton acceptor. K169 lines the substrate pocket. 3 residues coordinate Mg(2+): K193, D195, and E196. K193 is subject to N6-carboxylysine. Residue H286 is the Proton acceptor of the active site. Positions 287, 319, and 371 each coordinate substrate.

This sequence belongs to the RuBisCO large chain family. Type I subfamily. As to quaternary structure, heterohexadecamer of 8 large chains and 8 small chains. The cofactor is Mg(2+).

It catalyses the reaction 2 (2R)-3-phosphoglycerate + 2 H(+) = D-ribulose 1,5-bisphosphate + CO2 + H2O. It carries out the reaction D-ribulose 1,5-bisphosphate + O2 = 2-phosphoglycolate + (2R)-3-phosphoglycerate + 2 H(+). In terms of biological role, ruBisCO catalyzes two reactions: the carboxylation of D-ribulose 1,5-bisphosphate, the primary event in carbon dioxide fixation, as well as the oxidative fragmentation of the pentose substrate. Both reactions occur simultaneously and in competition at the same active site. The protein is Ribulose bisphosphate carboxylase large chain 1 of Allochromatium vinosum (strain ATCC 17899 / DSM 180 / NBRC 103801 / NCIMB 10441 / D) (Chromatium vinosum).